Reading from the N-terminus, the 153-residue chain is Cell division protein SepF (153 aa).

The protein belongs to the SepF family. In terms of assembly, homodimer. Interacts with FtsZ.

The protein localises to the cytoplasm. Functionally, cell division protein that is part of the divisome complex and is recruited early to the Z-ring. Probably stimulates Z-ring formation, perhaps through the cross-linking of FtsZ protofilaments. Its function overlaps with FtsA. The chain is Cell division protein SepF from Clostridium tetani (strain Massachusetts / E88).